The primary structure comprises 59 residues: Small EDRK-rich factor 2 (59 aa).

Composition is skewed to basic and acidic residues over residues 1-30 (MTRGNQRELARQKNMKKQSDSVKGKRRDDG) and 50-59 (KANEKKEEPK). The disordered stretch occupies residues 1–59 (MTRGNQRELARQKNMKKQSDSVKGKRRDDGLSAAARKQRDSEIMQQKQKKANEKKEEPK).

It belongs to the SERF family.

Positive regulator of amyloid protein aggregation and proteotoxicity. Induces conformational changes in amyloid proteins, such as HTT, driving them into compact formations preceding the formation of aggregates. This Plecturocebus moloch (Dusky titi monkey) protein is Small EDRK-rich factor 2 (SERF2).